The following is a 453-amino-acid chain: Aldehyde dehydrogenase, dimeric NADP-preferring (453 aa).

At Ser-2 the chain carries N-acetylserine. At Lys-178 the chain carries N6-acetyllysine. 188–193 (GSTAVG) lines the NAD(+) pocket. At Lys-194 the chain carries N6-acetyllysine. Residues Glu-210 and Cys-244 contribute to the active site.

Belongs to the aldehyde dehydrogenase family. As to quaternary structure, homodimer. In terms of tissue distribution, constitutively expressed in cornea, stomach, skin, bladder and lungs. Lowest expression levels in lungs and bladder.

It localises to the cytoplasm. It carries out the reaction an aldehyde + NAD(+) + H2O = a carboxylate + NADH + 2 H(+). The enzyme catalyses octanal + NAD(+) + H2O = octanoate + NADH + 2 H(+). Functionally, ALDHs play a major role in the detoxification of alcohol-derived acetaldehyde. They are involved in the metabolism of corticosteroids, biogenic amines, neurotransmitters, and lipid peroxidation. Oxidizes medium and long chain aldehydes into non-toxic fatty acids. Preferentially oxidizes aromatic aldehyde substrates. Comprises about 50 percent of corneal epithelial soluble proteins. May play a role in preventing corneal damage caused by ultraviolet light. The protein is Aldehyde dehydrogenase, dimeric NADP-preferring (Aldh3a1) of Mus musculus (Mouse).